Reading from the N-terminus, the 325-residue chain is D site-binding protein (325 aa).

Disordered regions lie at residues 1-99, 127-200, and 229-255; these read MARP…APGL, GLPP…DTVE, and RFSE…EQKD. A compositionally biased stretch (gly residues) spans 17 to 28; it reads GPAGTPPGGGAL. Low complexity-rich tracts occupy residues 29–38 and 57–80; these read LGLRSLLQGT and ALPA…PAGA. The residue at position 86 (Ser-86) is a Phosphoserine. The segment covering 129–153 has biased composition (pro residues); sequence PPSPPPPGGPSPEPSPARTPAPSPG. Positions 157 to 167 are enriched in low complexity; sequence CGSASPRSSPG. The region spanning 255-318 is the bZIP domain; sequence DEKYWSRRYK…SHYRAVLSRY (64 aa). Positions 257 to 279 are basic motif; sequence KYWSRRYKNNEAAKRSRDARRLK. A leucine-zipper region spans residues 283–297; it reads ISVRAAFLEKENALL.

The protein belongs to the bZIP family. PAR subfamily. In terms of assembly, binds DNA as a homodimer or a heterodimer. Can form a heterodimer with TEF. In terms of tissue distribution, ubiquitously expressed. Expressed in the suprachiasmatic nuclei (SCN) and in most peripheral tissues, with a strong circadian rhythmicity.

The protein localises to the nucleus. This transcriptional activator recognizes and binds to the sequence 5'-RTTAYGTAAY-3' found in the promoter of genes such as albumin, CYP2A4 and CYP2A5. It is not essential for circadian rhythm generation, but modulates important clock output genes. May be a direct target for regulation by the circadian pacemaker component clock. May affect circadian period and sleep regulation. This is D site-binding protein (DBP) from Homo sapiens (Human).